Reading from the N-terminus, the 342-residue chain is Isopentenyl-diphosphate delta-isomerase (342 aa).

11–12 (RK) contacts substrate. FMN is bound by residues serine 68, 69 to 71 (SMT), serine 99, and asparagine 128. 99 to 101 (SQR) contributes to the substrate binding site. Glutamine 162 is a substrate binding site. Residue glutamate 163 coordinates Mg(2+). FMN contacts are provided by residues lysine 194, serine 219, threonine 224, 275–277 (GVR), and 296–297 (AK).

This sequence belongs to the IPP isomerase type 2 family. In terms of assembly, homooctamer. Dimer of tetramers. FMN is required as a cofactor. The cofactor is NADPH. Requires Mg(2+) as cofactor.

Its subcellular location is the cytoplasm. It carries out the reaction isopentenyl diphosphate = dimethylallyl diphosphate. Involved in the biosynthesis of isoprenoids. Catalyzes the 1,3-allylic rearrangement of the homoallylic substrate isopentenyl (IPP) to its allylic isomer, dimethylallyl diphosphate (DMAPP). The polypeptide is Isopentenyl-diphosphate delta-isomerase (Legionella pneumophila (strain Paris)).